The primary structure comprises 1412 residues: DNA-directed RNA polymerase subunit beta' (1412 aa).

The Zn(2+) site is built by C70, C72, C85, and C88. Residues D460, D462, and D464 each contribute to the Mg(2+) site. The Zn(2+) site is built by C819, C893, C900, and C903. Positions 1392–1412 (EEAFEFGTPSAPAEEPQHPAE) are disordered.

Belongs to the RNA polymerase beta' chain family. In terms of assembly, the RNAP catalytic core consists of 2 alpha, 1 beta, 1 beta' and 1 omega subunit. When a sigma factor is associated with the core the holoenzyme is formed, which can initiate transcription. It depends on Mg(2+) as a cofactor. The cofactor is Zn(2+).

The enzyme catalyses RNA(n) + a ribonucleoside 5'-triphosphate = RNA(n+1) + diphosphate. Functionally, DNA-dependent RNA polymerase catalyzes the transcription of DNA into RNA using the four ribonucleoside triphosphates as substrates. This Burkholderia mallei (strain NCTC 10247) protein is DNA-directed RNA polymerase subunit beta'.